We begin with the raw amino-acid sequence, 423 residues long: Imidazolonepropionase (423 aa).

The Fe(3+) site is built by His-78 and His-80. Zn(2+) is bound by residues His-78 and His-80. 4-imidazolone-5-propanoate contacts are provided by Arg-87, Tyr-150, and His-183. Tyr-150 provides a ligand contact to N-formimidoyl-L-glutamate. His-247 provides a ligand contact to Fe(3+). His-247 lines the Zn(2+) pocket. Residue Glu-250 participates in 4-imidazolone-5-propanoate binding. Asp-322 contributes to the Fe(3+) binding site. Zn(2+) is bound at residue Asp-322. Positions 324 and 326 each coordinate N-formimidoyl-L-glutamate. Residue Ser-327 coordinates 4-imidazolone-5-propanoate.

The protein belongs to the metallo-dependent hydrolases superfamily. HutI family. Requires Zn(2+) as cofactor. Fe(3+) is required as a cofactor.

The protein localises to the cytoplasm. It carries out the reaction 4-imidazolone-5-propanoate + H2O = N-formimidoyl-L-glutamate. It participates in amino-acid degradation; L-histidine degradation into L-glutamate; N-formimidoyl-L-glutamate from L-histidine: step 3/3. Functionally, catalyzes the hydrolytic cleavage of the carbon-nitrogen bond in imidazolone-5-propanoate to yield N-formimidoyl-L-glutamate. It is the third step in the universal histidine degradation pathway. The protein is Imidazolonepropionase of Bacillus cereus (strain ZK / E33L).